Reading from the N-terminus, the 606-residue chain is NADH-ubiquinone oxidoreductase chain 5 (606 aa).

The next 16 helical transmembrane spans lie at 4 to 24, 38 to 58, 87 to 107, 114 to 134, 140 to 160, 171 to 191, 213 to 233, 241 to 261, 273 to 293, 301 to 320, 325 to 347, 366 to 386, 409 to 429, 457 to 477, 488 to 508, and 583 to 603; these read FPSL…TTTI, NIIS…IHSG, MIFV…SMWY, ITQF…LVTA, LFIG…WWYG, AILY…WFLF, LMGL…HPWL, TPVS…FLLI, VQTF…ICAL, IIAF…IGIN, AFLH…GSII, MPFT…MPFL, LLIT…MIFF, LLIG…PTTI, LTAL…SLAT, and LIKL…LLLM.

Belongs to the complex I subunit 5 family. As to quaternary structure, core subunit of respiratory chain NADH dehydrogenase (Complex I) which is composed of 45 different subunits.

The protein localises to the mitochondrion inner membrane. It catalyses the reaction a ubiquinone + NADH + 5 H(+)(in) = a ubiquinol + NAD(+) + 4 H(+)(out). Core subunit of the mitochondrial membrane respiratory chain NADH dehydrogenase (Complex I) which catalyzes electron transfer from NADH through the respiratory chain, using ubiquinone as an electron acceptor. Essential for the catalytic activity and assembly of complex I. The chain is NADH-ubiquinone oxidoreductase chain 5 (MT-ND5) from Ceratotherium simum (White rhinoceros).